Consider the following 183-residue polypeptide: Intermembrane phospholipid transport system binding protein MlaD (183 aa).

The Cytoplasmic portion of the chain corresponds to 1 to 7; that stretch reads MQTKKNE. Residues 8 to 28 traverse the membrane as a helical; Signal-anchor for type II membrane protein segment; it reads IWVGIFLLAALLAALFVCLKA. The Periplasmic segment spans residues 29-183; it reads ANVTSIRTEP…ETTEPVGTTK (155 aa). The tract at residues 39–116 is MCE/MlaD; sequence TYTLYATFDN…LGEQYLALNV (78 aa). The tract at residues 155 to 183 is disordered; that stretch reads KGDDNKNSGDAPAAAPGNNETTEPVGTTK. Polar residues predominate over residues 172–183; sequence NNETTEPVGTTK.

This sequence belongs to the MlaD family. As to quaternary structure, the complex is composed of two ATP-binding proteins (MlaF), two transmembrane proteins (MlaE), two cytoplasmic solute-binding proteins (MlaB) and six periplasmic solute-binding proteins (MlaD).

It localises to the cell inner membrane. In terms of biological role, part of the ABC transporter complex MlaFEDB, which is involved in a phospholipid transport pathway that maintains lipid asymmetry in the outer membrane by retrograde trafficking of phospholipids from the outer membrane to the inner membrane. MlaD functions in substrate binding with strong affinity for phospholipids and modulates ATP hydrolytic activity of the complex. This chain is Intermembrane phospholipid transport system binding protein MlaD, found in Escherichia coli O157:H7.